Reading from the N-terminus, the 418-residue chain is Serine hydroxymethyltransferase (418 aa).

(6S)-5,6,7,8-tetrahydrofolate contacts are provided by residues L121 and 125-127 (GHL). K230 bears the N6-(pyridoxal phosphate)lysine mark. 355-357 (SPF) serves as a coordination point for (6S)-5,6,7,8-tetrahydrofolate.

Belongs to the SHMT family. As to quaternary structure, homodimer. Requires pyridoxal 5'-phosphate as cofactor.

The protein resides in the cytoplasm. The enzyme catalyses (6R)-5,10-methylene-5,6,7,8-tetrahydrofolate + glycine + H2O = (6S)-5,6,7,8-tetrahydrofolate + L-serine. It participates in one-carbon metabolism; tetrahydrofolate interconversion. It functions in the pathway amino-acid biosynthesis; glycine biosynthesis; glycine from L-serine: step 1/1. Functionally, catalyzes the reversible interconversion of serine and glycine with tetrahydrofolate (THF) serving as the one-carbon carrier. This reaction serves as the major source of one-carbon groups required for the biosynthesis of purines, thymidylate, methionine, and other important biomolecules. Also exhibits THF-independent aldolase activity toward beta-hydroxyamino acids, producing glycine and aldehydes, via a retro-aldol mechanism. The protein is Serine hydroxymethyltransferase of Alcanivorax borkumensis (strain ATCC 700651 / DSM 11573 / NCIMB 13689 / SK2).